Here is a 305-residue protein sequence, read N- to C-terminus: Phosphoinositol dihydroceramide synthase (305 aa).

The N-terminal stretch at 1–23 (MPSKKETLTVIVIMALFLLLTAA) is a signal peptide. The N-palmitoyl cysteine moiety is linked to residue C24. C24 carries the S-diacylglycerol cysteine lipid modification. The next 6 helical transmembrane spans lie at 41–61 (LFFAGLPTRKLAVALLPFAIF), 117–137 (VFAGIFYLCWVPVPILFGLCL), 149–169 (FALVFLFVNLIGFAGYYIHPA), 216–236 (FAAVPSLHAAYMVVALVYAII), 241–261 (WYVIALFSVIMAGIWGTAIYS), and 266–286 (IIDVLLGISCALLGWLFFEYG).

Its subcellular location is the membrane. It catalyses the reaction N-(2-hydroxy-fatty acyl)-dihydroceramide + a 1,2-diacyl-sn-glycero-3-phospho-(1D-myo-inositol) = inositol-1-phospho-N-(2-hydroxy-fatty acyl)-dihydroceramide + a 1,2-diacyl-sn-glycerol. Its function is as follows. Catalyzes the addition of a phosphorylinositol group onto dihydroceramide to form phosphoinositol dihydroceramide (PI-DHC), an essential step in sphingolipid biosynthesis. This is Phosphoinositol dihydroceramide synthase from Bacteroides thetaiotaomicron (strain ATCC 29148 / DSM 2079 / JCM 5827 / CCUG 10774 / NCTC 10582 / VPI-5482 / E50).